Consider the following 641-residue polypeptide: Chaperone protein DnaK (641 aa).

Thr-200 bears the Phosphothreonine; by autocatalysis mark. Positions Ala-605–Lys-623 are enriched in low complexity. The segment at Ala-605 to Asp-627 is disordered.

The protein belongs to the heat shock protein 70 family.

Acts as a chaperone. The protein is Chaperone protein DnaK of Xanthomonas oryzae pv. oryzae (strain MAFF 311018).